A 100-amino-acid chain; its full sequence is MRFGASLNCGASGWVKSTKSPLTSLWTNCAWAKHNPPFALQNRHCLTPGEKALSGRASRPLRSARVAIFMAFCAPDLACSPKSFKSSTDTAHSDRWLSLG.

A disordered region spans residues 81–100 (PKSFKSSTDTAHSDRWLSLG). A compositionally biased stretch (basic and acidic residues) spans 91–100 (AHSDRWLSLG).

This chain is Putative protein p52 (52), found in Escherichia coli (Bacteriophage APSE-1).